The sequence spans 338 residues: Palmitoyltransferase ZDHHC15 (338 aa).

Residues 1–20 (MLAGCRVALPRGLRCCQRVL) are Cytoplasmic-facing. Residues 21 to 41 (SWVPVVIISLVVLWSYYAYVW) traverse the membrane as a helical segment. Residues 42–56 (ELCLVTVTNPAEKAA) are Lumenal-facing. The chain crosses the membrane as a helical span at residues 57–77 (YLLIFHTVFLLFIWTYWKAIF). The Cytoplasmic portion of the chain corresponds to 78 to 172 (TPPKQPTKKF…NNCIGYSNYK (95 aa)). Positions 129 to 179 (RFCDTCQMVKPDRCHHCSVCGMCVLKMDHHCPWVNNCIGYSNYKFFLLFLA) constitute a DHHC domain. Zn(2+) contacts are provided by C131, C134, H144, C145, C148, C151, and H158. The active-site S-palmitoyl cysteine intermediate is the C159. C165 contacts Zn(2+). Residues 173 to 193 (FFLLFLAYAMLYCLYIGCTVF) traverse the membrane as a helical segment. At 194–210 (QYFILYWTDTLSNGRAK) the chain is on the lumenal side. The chain crosses the membrane as a helical span at residues 211–234 (FHVLFLLFVALMFFISLMFLFGYH). Over 235–338 (CWLVSLNRTT…TSHITVHIEK (104 aa)) the chain is Cytoplasmic.

The protein belongs to the DHHC palmitoyltransferase family. In terms of processing, autopalmitoylated (in vitro).

Its subcellular location is the golgi apparatus membrane. The protein localises to the postsynaptic density. The enzyme catalyses L-cysteinyl-[protein] + hexadecanoyl-CoA = S-hexadecanoyl-L-cysteinyl-[protein] + CoA. It catalyses the reaction L-cysteinyl-[protein] + tetradecanoyl-CoA = S-tetradecanoyl-L-cysteinyl-[protein] + CoA. It carries out the reaction L-cysteinyl-[protein] + octadecanoyl-CoA = S-octadecanoyl-L-cysteinyl-[protein] + CoA. In terms of biological role, palmitoyltransferase that catalyzes the addition of palmitate onto various protein substrates. Has no stringent fatty acid selectivity and in addition to palmitate can also transfer onto target proteins myristate from tetradecanoyl-CoA and stearate from octadecanoyl-CoA. May thereby regulate target proteins association and localization to membranes. In the nervous system, probably catalyzes the palmitoylation of synaptic proteins and is involved in the differentiation of dopaminergic neurons and the development of the diencephalon. The chain is Palmitoyltransferase ZDHHC15 (zdhhc15) from Xenopus laevis (African clawed frog).